The following is a 1083-amino-acid chain: FACT complex subunit spt16 (1083 aa).

S437 carries the phosphoserine modification. A coiled-coil region spans residues 466–504 (LESKLRNEINTEEKRKEHQRELAQQLNERAKDRLARQGN). Residues 923-1083 (FEQGGWTFLD…NGHKSKKSRH (161 aa)) are disordered. Over residues 935 to 987 (SGSEGENETAESEEDEAYNPTDAESDEESDEDSEYSEASEDSEESDEDLGSDE) the composition is skewed to acidic residues. The span at 988–1023 (ESGKDWSDLEREAAEEDRNHDYAADDKPRNGKFDSK) shows a compositional bias: basic and acidic residues. Residues 1024-1033 (KHGKSSKHSP) are compositionally biased toward basic residues. The segment covering 1058–1076 (SSKDKDRKRSRDDSRDNGH) has biased composition (basic and acidic residues).

This sequence belongs to the peptidase M24 family. SPT16 subfamily. Component of the FACT complex, a stable heterodimer of dre4/spt16 and Ssrp. Interacts with TRL/GAGA.

Its subcellular location is the nucleus. It localises to the chromosome. Functionally, component of the FACT complex, a general chromatin factor that acts to reorganize nucleosomes. The FACT complex is involved in multiple processes that require DNA as a template such as mRNA elongation, DNA replication and DNA repair. During transcription elongation the FACT complex acts as a histone chaperone that both destabilizes and restores nucleosomal structure. It facilitates the passage of RNA polymerase II and transcription by promoting the dissociation of one histone H2A-H2B dimer from the nucleosome, then subsequently promotes the reestablishment of the nucleosome following the passage of RNA polymerase II. The FACT complex is required for expression of Hox genes. The protein is FACT complex subunit spt16 (dre4) of Drosophila melanogaster (Fruit fly).